Here is a 178-residue protein sequence, read N- to C-terminus: uncharacterized protein (178 aa).

The N-terminal stretch at 1-19 (MINRKILLTSLLLIFTVLS) is a signal peptide. Active-site residues include arginine 52, glutamate 60, and arginine 94.

Belongs to the thermonuclease family.

This is an uncharacterized protein from Haemophilus influenzae (strain ATCC 51907 / DSM 11121 / KW20 / Rd).